Reading from the N-terminus, the 775-residue chain is Acylamino-acid-releasing enzyme 1 (775 aa).

Catalysis depends on charge relay system residues Ser-627, Asp-718, and His-750.

This sequence belongs to the peptidase S9C family. Homotetramer.

It is found in the cytoplasm. It carries out the reaction Cleavage of an N-acetyl or N-formyl amino acid from the N-terminus of a polypeptide.. In terms of biological role, catalyzes the hydrolysis of the N-terminal peptide bond of an N-acetylated peptide to generate an N-acetylated amino acid and a peptide with a free N-terminus. The protein is Acylamino-acid-releasing enzyme 1 of Oryza sativa subsp. japonica (Rice).